Consider the following 338-residue polypeptide: Nicotinate-nucleotide--dimethylbenzimidazole phosphoribosyltransferase (338 aa).

E305 serves as the catalytic Proton acceptor.

It belongs to the CobT family.

It catalyses the reaction 5,6-dimethylbenzimidazole + nicotinate beta-D-ribonucleotide = alpha-ribazole 5'-phosphate + nicotinate + H(+). The protein operates within nucleoside biosynthesis; alpha-ribazole biosynthesis; alpha-ribazole from 5,6-dimethylbenzimidazole: step 1/2. Its function is as follows. Catalyzes the synthesis of alpha-ribazole-5'-phosphate from nicotinate mononucleotide (NAMN) and 5,6-dimethylbenzimidazole (DMB). The polypeptide is Nicotinate-nucleotide--dimethylbenzimidazole phosphoribosyltransferase (Rhizobium rhizogenes (strain K84 / ATCC BAA-868) (Agrobacterium radiobacter)).